A 171-amino-acid polypeptide reads, in one-letter code: Calcium-binding allergen Ole e 8 (171 aa).

EF-hand domains lie at 16–51 (QEPNEVQGVFNRFDANGDGKISGDELAGVLKALGSN), 52–87 (TSKEEIGRIMEEIDTDKDGFINVQEFAAFVKAETDP), 92–127 (GGENELKEAFELYDQDHNGLISSVELHKILTRLGER), and 128–163 (YAEHDCVEMIKSVDSDGDGYVSFEEFKKMMTNKSGN). Positions 29, 31, 33, 35, 40, 65, 67, 69, 76, 105, 107, 109, 116, 141, 143, 145, 147, and 152 each coordinate Ca(2+).

Homodimer. As to expression, expressed in pollen.

The protein is Calcium-binding allergen Ole e 8 of Olea europaea (Common olive).